Consider the following 96-residue polypeptide: Ribonuclease P protein component 1 (96 aa).

It belongs to the eukaryotic/archaeal RNase P protein component 1 family. In terms of assembly, consists of a catalytic RNA component and at least 4-5 protein subunits.

It is found in the cytoplasm. The catalysed reaction is Endonucleolytic cleavage of RNA, removing 5'-extranucleotides from tRNA precursor.. Its function is as follows. Part of ribonuclease P, a protein complex that generates mature tRNA molecules by cleaving their 5'-ends. This Methanococcus aeolicus (strain ATCC BAA-1280 / DSM 17508 / OCM 812 / Nankai-3) protein is Ribonuclease P protein component 1.